The chain runs to 258 residues: SLA class II histocompatibility antigen, DQ haplotype D beta chain (258 aa).

An N-terminal signal peptide occupies residues 1-31 (MVALRLPRGLWTAALTVMLVVLGAPVAEGRD). Positions 32–123 (SPQDFVVQFK…IEEGTTLQRR (92 aa)) are beta-1. The Extracellular segment spans residues 32 to 227 (SPQDFVVQFK…RAQSESAQSK (196 aa)). Intrachain disulfides connect C44–C108 and C146–C202. N48 carries N-linked (GlcNAc...) asparagine glycosylation. A beta-2 region spans residues 124 to 217 (VQPTVTISPS…SLQSPILVEW (94 aa)). An Ig-like C1-type domain is found at 126-230 (PTVTISPSKA…SESAQSKMLS (105 aa)). The segment at 218–227 (RAQSESAQSK) is connecting peptide. A helical transmembrane segment spans residues 228 to 248 (MLSGVGGFVLGLIFLGLGLFI). Residues 249–258 (RHRSQKGLVR) are Cytoplasmic-facing.

This sequence belongs to the MHC class II family.

It localises to the membrane. The polypeptide is SLA class II histocompatibility antigen, DQ haplotype D beta chain (Sus scrofa (Pig)).